The chain runs to 232 residues: MSNPTIEGDENRKENTKSNTKPNFDDLDDLDDILDDLDVPSAFKNEEKKNIDEHKQTGNTSKENERIKNDDNLNSLIQEMMSKFEDLGGPSGLDGSQLSSSFQNDQLLNVILEDQFATEKDSDNGAVNYGALEAALNSLMSQVTSKEILYEPLKDLEANYPKFLKNAKETEKQGFEEQYQKIQKCIQIFESPEYDARKDADIISKLVEEIQEKPLPAPLIDNSMETAGCPTQ.

The interval 1 to 71 (MSNPTIEGDE…KENERIKNDD (71 aa)) is disordered. Residues 25–38 (DDLDDLDDILDDLD) show a composition bias toward acidic residues. Residues 44-71 (KNEEKKNIDEHKQTGNTSKENERIKNDD) show a composition bias toward basic and acidic residues.

This is an uncharacterized protein from Schizosaccharomyces pombe (strain 972 / ATCC 24843) (Fission yeast).